A 401-amino-acid polypeptide reads, in one-letter code: Anhydro-N-acetylmuramic acid kinase (401 aa).

ATP is bound at residue 25-32 (GTSLDGLD).

The protein belongs to the anhydro-N-acetylmuramic acid kinase family.

It catalyses the reaction 1,6-anhydro-N-acetyl-beta-muramate + ATP + H2O = N-acetyl-D-muramate 6-phosphate + ADP + H(+). Its pathway is amino-sugar metabolism; 1,6-anhydro-N-acetylmuramate degradation. The protein operates within cell wall biogenesis; peptidoglycan recycling. In terms of biological role, catalyzes the specific phosphorylation of 1,6-anhydro-N-acetylmuramic acid (anhMurNAc) with the simultaneous cleavage of the 1,6-anhydro ring, generating MurNAc-6-P. Is required for the utilization of anhMurNAc either imported from the medium or derived from its own cell wall murein, and thus plays a role in cell wall recycling. This chain is Anhydro-N-acetylmuramic acid kinase, found in Pseudoalteromonas translucida (strain TAC 125).